The following is a 1838-amino-acid chain: MVSPKDLVAIVHSSLLGTSRPTPTQRIELTHAIRNSFPSLQNLLSFPPPKPSDRAQVQSKEIRLPDSLPISLDDQDIAISLKLSDELHLNEIDSVRLLVSSNQEWGLMGRDPLEIQRLATGLWYTGRRDLTSTLYTLLRAVVLDEGLEPDLIADIQGLLEELIEAGLRQRLITLIKELNREDPTGLGGPLCERYLIDSRGALVERRAVVQRERLILGHCLVLSILVDRPGSKDVKDIYYILKDNAAQLTEGNDTISSQITFSLLFSLIITFVSDAISRLSDKSSMISQDASFRTDFQDIVMASGSDPTADGFIGGIRLAWAVHLMLIHDGISGMDTISTASTTDMGHICSCLESIFSKNVFQFLLDNVLRTAAYQNDEEDIIYIYNAYLHKLASCFLSHPIARDKVKESKDMAMSVLNSYRTSDPLDGSMQTEESDRPLPFISLMEFKEPELLSGNDVLWTFVNFAGEDHTNFKTLVAFLEMLCTLASTQEGASKVYELLRGTSFRSIGWPTLFDCIRIYDEKFKQSLQTAGAMMPEFLEGDAKALVAYLNVLQKVVENGNPTERKNWFPDIEPFFKLLGYENIPPYLKGALRKTIAAFVNVFPEMRDSIWAFLEQYDLPVVVGSQVGKSDQSSQVYDMQFELNEVEARREQYPSTISFLNLINALIAGEKDVNDRGRRAYSDPCEKWQLVVACLQHFHMILSMYDIQEEDLDGFTEHPHFLVSLETSSLQTQLPIIELLKDFMSGKALYRNLMGILQVGVNSIISERLSKTYGKILEKAVQLSLEILLLVFEKDLLVSDVWRPLYQPLDIILSQDHNQIIALLEYVRYDSLPQIQRSSIKIMNILRCSRLVGLVPMLIKIDAANSLIEDYAACLEGRLEEGEVVENSCDDLGVLIMQLLVDNINRPAPSITHLLLKFDLDAPVEGTVLQPKFHYSCLKVILEMLEKLPNPDINFLLFEFGFQLLCELNLDPLTSGPTMDLLSSKKYQFFLQHLDTIGVATLPKRSGSQALRISSLHQRAWLLKLLAIALHTGSGSSSAHLEACQSILSHLFGREVTEAANEPFSSSTYPQDGLDYAGTSSISKSKALALLEILQFRSPDASMQLPQIVSSLKYDSLVEDILGNRDTSVSGSIYYYSERGDRLIDLSSFSNKLWQKLHSGFPLVDSFPNVAELSEVRETIQQLLKWGWKYNRNLEEQAAQLHMLAGWSQIVEVSACRRISSLDNRSEILYRILDASLSASASPDCSLKMAFVLTQVALTCIAKLRDDRFSFQGALSSDTVTCLDVMMVKHLSTGACHSVLFKLVMAILRHESSESLRRRQYALLLSYFQYCQHMIALDVPTSVVQFLLLNEQDGEDLDIQKIDKEQADLARANFFIIKKEAQGILDLVIKDASQGSEFGKTISLYVLEALVCIDHERYFLSQLQSRGFIRSCLGSISNISYQDGTHLLESQQRACTLEAELALLLRISHKYGKSGGQVLFSMGALEHIASCRAISFKGNMRRVDMKLQSDVGYNVQKQRTIITAVLRLVFALTSLVETSEFFEGRNKIVRDVVEFIKGHQSLFDQLLREDFTQADDLLMEQIILAVGILSKVWPFEENDGYGFVQGLFDMMSKLFIASPIKSILSQGSELKLSQLRFSLTSYLYFLVTKNSLRLQVSDDSLDSSTKLRQPTLLLLASLLSHVTDSLERAAEKKSLLLHKIRDINELSRQDVDAIIKICDSQEYVTPSDNIHKRRYIAMVEMCQIVGNRDQLITLLLQLAEHVLNIILIHLQDRSVSSNERGSYGSKSHIQQEVTDLCGKLSPTIDRLALLNEGKVGHNLKVFQRLATTVKEMAIQKCV.

It belongs to the NUP186/NUP192/NUP205 family. Part of the nuclear pore complex (NPC). The NPC has an eight-fold symmetrical structure comprising a central transport channel and two rings, the cytoplasmic and nuclear rings, to which eight filaments are attached. The cytoplasmic filaments have loose ends, while the nuclear filaments are joined in a distal ring, forming a nuclear basket. NPCs are highly dynamic in configuration and composition, and can be devided in 3 subcomplexes, the NUP62 subcomplex, the NUP107-160 subcomplex and the NUP93 subcomplex, containing approximately 30 different nucleoporin proteins.

Its subcellular location is the nucleus envelope. It localises to the nucleus. It is found in the nuclear pore complex. This is Nuclear pore complex protein NUP205 from Arabidopsis thaliana (Mouse-ear cress).